The sequence spans 288 residues: Probable branched-chain-amino-acid aminotransferase (288 aa).

The residue at position 153 (Lys-153) is an N6-(pyridoxal phosphate)lysine.

This sequence belongs to the class-IV pyridoxal-phosphate-dependent aminotransferase family. Requires pyridoxal 5'-phosphate as cofactor.

It catalyses the reaction L-leucine + 2-oxoglutarate = 4-methyl-2-oxopentanoate + L-glutamate. It carries out the reaction L-isoleucine + 2-oxoglutarate = (S)-3-methyl-2-oxopentanoate + L-glutamate. The catalysed reaction is L-valine + 2-oxoglutarate = 3-methyl-2-oxobutanoate + L-glutamate. It functions in the pathway amino-acid biosynthesis; L-isoleucine biosynthesis; L-isoleucine from 2-oxobutanoate: step 4/4. Its pathway is amino-acid biosynthesis; L-leucine biosynthesis; L-leucine from 3-methyl-2-oxobutanoate: step 4/4. It participates in amino-acid biosynthesis; L-valine biosynthesis; L-valine from pyruvate: step 4/4. Its function is as follows. Acts on leucine, isoleucine and valine. In Rickettsia typhi (strain ATCC VR-144 / Wilmington), this protein is Probable branched-chain-amino-acid aminotransferase (ilvE).